Here is a 223-residue protein sequence, read N- to C-terminus: Small ribosomal subunit protein uS3 (223 aa).

In terms of domain architecture, KH type-2 spans Ile39–Lys108.

This sequence belongs to the universal ribosomal protein uS3 family. In terms of assembly, part of the 30S ribosomal subunit. Forms a tight complex with proteins S10 and S14.

Functionally, binds the lower part of the 30S subunit head. Binds mRNA in the 70S ribosome, positioning it for translation. In Clostridium botulinum (strain 657 / Type Ba4), this protein is Small ribosomal subunit protein uS3.